Reading from the N-terminus, the 379-residue chain is GDSL esterase/lipase At3g05180 (379 aa).

The first 27 residues, 1 to 27 (METLFHTLLRLLLFVAISHTLSPLAGS), serve as a signal peptide directing secretion. Ser43 functions as the Nucleophile in the catalytic mechanism. N-linked (GlcNAc...) asparagine glycosylation is found at Asn294 and Asn330. Residues Asp349 and His352 contribute to the active site.

It belongs to the 'GDSL' lipolytic enzyme family.

It is found in the secreted. The polypeptide is GDSL esterase/lipase At3g05180 (Arabidopsis thaliana (Mouse-ear cress)).